The sequence spans 88 residues: N(2)-fixation sustaining protein CowN (88 aa).

The protein belongs to the CowN family.

In terms of biological role, is required to sustain N(2)-dependent growth in the presence of low levels of carbon monoxide (CO). Probably acts by protecting the N(2) fixation ability of the nitrogenase complex, which is inactivated in the presence of CO. The chain is N(2)-fixation sustaining protein CowN from Rhodomicrobium vannielii (strain ATCC 17100 / DSM 162 / LMG 4299 / NCIMB 10020 / ATH 3.1.1).